A 71-amino-acid polypeptide reads, in one-letter code: Brevinin-1E (71 aa).

A signal peptide spans Met1 to Cys22. The propeptide occupies Glu23 to Glu45. Cys65 and Cys71 are joined by a disulfide.

The protein belongs to the frog skin active peptide (FSAP) family. Brevinin subfamily. Expressed by the skin glands.

The protein localises to the secreted. Its function is as follows. Shows antibacterial activity against representative Gram-negative and Gram-positive bacterial species, and a very high hemolytic activity. In Pelophylax lessonae (Pool frog), this protein is Brevinin-1E.